A 289-amino-acid chain; its full sequence is N-acetylmuramoyl-L-alanine amidase AmiA (289 aa).

Positions 1 to 34 form a signal peptide, tat-type signal; it reads MSTFKLLKTLTSRRQVLKTGLAALTLSGMSHAVA. Residues 36 to 61 form a disordered region; the sequence is EETLKTSNGHSKPKTKKTGSKRLVML. A compositionally biased stretch (basic residues) spans 46 to 55; the sequence is SKPKTKKTGS. Positions 59 to 273 constitute a MurNAc-LAA domain; the sequence is VMLDPGHGGI…IATAIANGII (215 aa).

Belongs to the N-acetylmuramoyl-L-alanine amidase 3 family. In terms of processing, predicted to be exported by the Tat system. The position of the signal peptide cleavage has not been experimentally proven.

It is found in the periplasm. It carries out the reaction Hydrolyzes the link between N-acetylmuramoyl residues and L-amino acid residues in certain cell-wall glycopeptides.. Its function is as follows. Cell-wall hydrolase involved in septum cleavage during cell division. This is N-acetylmuramoyl-L-alanine amidase AmiA (amiA) from Salmonella typhimurium (strain LT2 / SGSC1412 / ATCC 700720).